We begin with the raw amino-acid sequence, 560 residues long: Kinesin light chain 1 (560 aa).

A coiled-coil region spans residues 31 to 99 (VIQGLEALKN…MALSNHLNAV (69 aa)). Positions 155–176 (KKYDDDISPSEDKDTDSTKEPL) are enriched in basic and acidic residues. The tract at residues 155–203 (KKYDDDISPSEDKDTDSTKEPLDDLFPNDEDDPGQGIQQQHSSAAAAAQ) is disordered. Ser162 carries the post-translational modification Phosphoserine. Low complexity predominate over residues 192–203 (QQQHSSAAAAAQ). 5 TPR repeats span residues 213–246 (LRTL…LEKT), 255–288 (ATML…REKT), 297–330 (AATL…REKV), 339–372 (AKQL…YQTK), and 381–414 (AKTK…AHER). Position 449 is a phosphotyrosine (Tyr449). Ser460 bears the Phosphoserine mark. The TPR 6 repeat unit spans residues 464-497 (TTTLKNLGALYRRQGKFEAAETLEEAAMRSRKQG). 2 positions are modified to phosphoserine; by AMPK: Ser521 and Ser524.

Belongs to the kinesin light chain family. In terms of assembly, oligomeric complex composed of two heavy chains and two light chains. Interacts with SPAG9. Interacts with ATCAY; may link mitochondria to KLC1 and regulate mitochondria localization into neuron projections. Interacts (via TPR repeats) with TOR1A; the interaction associates TOR1A with the kinesin oligomeric complex. Interacts with BORCS5. Interacts with MAPK8IP3/JIP3 and NTRK2/TRKB; interaction with NTRK2/TRKB is mediated by MAPK8IP3/JIP3. Interacts with CLSTN1; phosphorylation at Ser-460 inhibits interaction with CLSTN1. Post-translationally, phosphorylation at Ser-460 by ERK inhibits interaction with CLSTN1 and localization to cytoplasmic vesicles.

The protein localises to the cell projection. It localises to the growth cone. Its subcellular location is the cytoplasmic vesicle. It is found in the cytoplasm. The protein resides in the cytoskeleton. Its function is as follows. Kinesin is a microtubule-associated force-producing protein that may play a role in organelle transport. The light chain may function in coupling of cargo to the heavy chain or in the modulation of its ATPase activity. This chain is Kinesin light chain 1 (KLC1), found in Pongo abelii (Sumatran orangutan).